The primary structure comprises 70 residues: Protein tam14 (70 aa).

Residues methionine 1 to asparagine 19 show a composition bias toward polar residues. Residues methionine 1–isoleucine 20 are disordered. A helical membrane pass occupies residues isoleucine 45–leucine 65.

The protein belongs to the RAMP4 family.

The protein localises to the membrane. The protein resides in the endoplasmic reticulum membrane. In terms of biological role, interacts with target proteins during their translocation into the lumen of the endoplasmic reticulum. Protects unfolded target proteins against degradation during ER stress. May facilitate glycosylation of target proteins after termination of ER stress. This is Protein tam14 (tam14) from Schizosaccharomyces pombe (strain 972 / ATCC 24843) (Fission yeast).